The chain runs to 532 residues: Probable cytochrome c oxidase subunit 1 (532 aa).

Helical transmembrane passes span 33–53 (IMYI…SLLF), 74–94 (VLIT…ALFG), 95–115 (GFGN…FPRL), 118–138 (ISFW…FVDG), 163–183 (MAIF…INLI), 200–220 (PLFV…MPVL), 252–272 (LFWF…FGIV), and 284–304 (IFGY…GFIV). A Fe(II)-heme a-binding site is contributed by H79. Residues H258 and Y262 each contribute to the Cu cation site. Residues H307 and H308 each coordinate Cu cation. 2 helical membrane passes run 318 to 338 (ALIY…IKIF) and 355 to 375 (MLFS…GIIL). H393 is a heme a3 binding site. A run of 3 helical transmembrane segments spans residues 394-414 (FHYT…YYWF), 431-451 (FWIT…LGLA), and 473-493 (IGAG…FYTL). A Fe(II)-heme a-binding site is contributed by H395.

This sequence belongs to the heme-copper respiratory oxidase family.

The protein localises to the cell membrane. The catalysed reaction is 4 Fe(II)-[cytochrome c] + O2 + 8 H(+)(in) = 4 Fe(III)-[cytochrome c] + 2 H2O + 4 H(+)(out). The protein operates within energy metabolism; oxidative phosphorylation. In terms of biological role, cytochrome c oxidase is the component of the respiratory chain that catalyzes the reduction of oxygen to water. Subunits 1-3 form the functional core of the enzyme complex. CO I is the catalytic subunit of the enzyme. Electrons originating in cytochrome c are transferred via the copper A center of subunit 2 and heme A of subunit 1 to the bimetallic center formed by heme A3 and copper B. The sequence is that of Probable cytochrome c oxidase subunit 1 (ctaD) from Rickettsia felis (strain ATCC VR-1525 / URRWXCal2) (Rickettsia azadi).